The chain runs to 152 residues: Transcriptional regulator MraZ (152 aa).

SpoVT-AbrB domains are found at residues 5–52 (VTSI…PLHE) and 81–124 (ATEC…QDKQ).

Belongs to the MraZ family. Forms oligomers.

It localises to the cytoplasm. The protein resides in the nucleoid. This chain is Transcriptional regulator MraZ, found in Actinobacillus pleuropneumoniae serotype 5b (strain L20).